Here is a 172-residue protein sequence, read N- to C-terminus: Ribosome maturation factor RimM (172 aa).

The PRC barrel domain occupies 96–168 (DGEFYYHEII…RVDVELLEGL (73 aa)).

It belongs to the RimM family. As to quaternary structure, binds ribosomal protein uS19.

It is found in the cytoplasm. An accessory protein needed during the final step in the assembly of 30S ribosomal subunit, possibly for assembly of the head region. Essential for efficient processing of 16S rRNA. May be needed both before and after RbfA during the maturation of 16S rRNA. It has affinity for free ribosomal 30S subunits but not for 70S ribosomes. This is Ribosome maturation factor RimM from Streptococcus suis (strain 05ZYH33).